The sequence spans 383 residues: Homeobox protein SHOOT MERISTEMLESS (383 aa).

The interval 37-58 is disordered; it reads HQQHHGHDQQHQHQQQHDGYAY. The region spanning 263–283 is the ELK domain; it reads ELKGQLLRKYSGYLGSLKQEF. The segment at residues 284–347 is a DNA-binding region (homeobox; TALE-type); the sequence is MKKRKKGKLP…NQRKRHWKPS (64 aa).

Belongs to the TALE/KNOX homeobox family.

It is found in the nucleus. Required for shoot apical meristem formation during embryogenesis. Probably binds to the DNA sequence 5'-TGAC-3'. In Brassica oleracea (Wild cabbage), this protein is Homeobox protein SHOOT MERISTEMLESS (STM).